Reading from the N-terminus, the 419-residue chain is Serine hydroxymethyltransferase (419 aa).

(6S)-5,6,7,8-tetrahydrofolate contacts are provided by residues Leu119 and 123-125 (GHL). Residue Lys228 is modified to N6-(pyridoxal phosphate)lysine.

The protein belongs to the SHMT family. In terms of assembly, homodimer. Pyridoxal 5'-phosphate is required as a cofactor.

It is found in the cytoplasm. The enzyme catalyses (6R)-5,10-methylene-5,6,7,8-tetrahydrofolate + glycine + H2O = (6S)-5,6,7,8-tetrahydrofolate + L-serine. The protein operates within one-carbon metabolism; tetrahydrofolate interconversion. It functions in the pathway amino-acid biosynthesis; glycine biosynthesis; glycine from L-serine: step 1/1. In terms of biological role, catalyzes the reversible interconversion of serine and glycine with tetrahydrofolate (THF) serving as the one-carbon carrier. This reaction serves as the major source of one-carbon groups required for the biosynthesis of purines, thymidylate, methionine, and other important biomolecules. Also exhibits THF-independent aldolase activity toward beta-hydroxyamino acids, producing glycine and aldehydes, via a retro-aldol mechanism. The polypeptide is Serine hydroxymethyltransferase (Desulfosudis oleivorans (strain DSM 6200 / JCM 39069 / Hxd3) (Desulfococcus oleovorans)).